The following is a 151-amino-acid chain: Transcriptional repressor NrdR (151 aa).

The segment at 3–34 is a zinc-finger region; that stretch reads CPYCGYEETRVLDSRVDSSGMTVRRRRECVKC. An ATP-cone domain is found at 49–139; sequence VFVVKKDGKR…VYKDFREIDQ (91 aa).

It belongs to the NrdR family. Zn(2+) is required as a cofactor.

Negatively regulates transcription of bacterial ribonucleotide reductase nrd genes and operons by binding to NrdR-boxes. This is Transcriptional repressor NrdR from Thermosipho melanesiensis (strain DSM 12029 / CIP 104789 / BI429).